A 57-amino-acid polypeptide reads, in one-letter code: MTTCKDCAFFFSIPEDADDFEKSKGDCVTQKDDEKGRYWLSKPVFENDQCCGAFHKR.

In terms of assembly, heterohexamer composed of 2 alpha subunits, 2 beta subunits and 2 gamma subunits.

The enzyme catalyses toluene + fumarate = 2-benzylsuccinate. It functions in the pathway xenobiotic degradation; toluene degradation. Its activity is regulated as follows. Activated by the benzylsuccinate synthase activating enzyme BssD. Rapidly inactivated by oxygen. Functionally, catalyzes the addition of fumarate to the methyl group of toluene, leading to the formation of benzylsuccinate. This chain is Benzylsuccinate synthase gamma subunit (bssC), found in Thauera aromatica.